Consider the following 195-residue polypeptide: ADP-ribosylation factor L (195 aa).

G2 carries the N-myristoyl glycine lipid modification. Residues 25–32 (GLENSGKT), 72–76 (DLLYP), and 131–134 (NKQD) contribute to the GTP site.

The protein belongs to the small GTPase superfamily. Arf family.

May be involved in trafficking events within the endosomal system. This Dictyostelium discoideum (Social amoeba) protein is ADP-ribosylation factor L (arrL).